A 187-amino-acid polypeptide reads, in one-letter code: MAADISQWAGPLSLQEVDEPPQHALRVDYGGVTVDELGKVLTPTQVMNRPSSISWDGLDPGKLYTLVLTDPDAPSRKDPKFREWHHFLVVNMKGNDISSGTVLSEYVGSGPPKDTGLHRYVWLVYEQEQPLNCDEPILSNKSGDNRGKFKVESFRKKYHLGAPVAGTCFQAEWDDSVPKLHDQLAGK.

Ala-2 is subject to N-acetylalanine; in peptide hippocampal cholinergic neurostimulating. 2 positions are modified to phosphoserine: Ser-6 and Ser-13. Thr-42 bears the Phosphothreonine mark. A phosphoserine mark is found at Ser-52, Ser-54, Ser-98, and Ser-153. The tract at residues 93–134 (KGNDISSGTVLSEYVGSGPPKDTGLHRYVWLVYEQEQPLNCD) is interaction with RAF1.

This sequence belongs to the phosphatidylethanolamine-binding protein family. In terms of assembly, has a tendency to form dimers by disulfide cross-linking. Interacts with RAF1 and this interaction is enhanced if RAF1 is phosphorylated on residues 'Ser-338', 'Ser-339', 'Tyr-340' and 'Tyr-341'. Interacts with ALOX15; in response to IL13/interleukin-13, prevents the interaction of PEBP1 with RAF1 to activate the ERK signaling cascade. In terms of tissue distribution, major component of epididymal secretions and sperm plasma membranes. It is present in cytosols from a variety of other tissues. Highly expressed in brain.

The protein resides in the cytoplasm. It localises to the membrane. Binds ATP, opioids and phosphatidylethanolamine. Has lower affinity for phosphatidylinositol and phosphatidylcholine. Serine protease inhibitor which inhibits thrombin, neuropsin and chymotrypsin but not trypsin, tissue type plasminogen activator and elastase. Inhibits the kinase activity of RAF1 by inhibiting its activation and by dissociating the RAF1/MEK complex and acting as a competitive inhibitor of MEK phosphorylation. In terms of biological role, HCNP may be involved in the function of the presynaptic cholinergic neurons of the central nervous system. HCNP increases the production of choline acetyltransferase but not acetylcholinesterase. Seems to be mediated by a specific receptor. The protein is Phosphatidylethanolamine-binding protein 1 (Pebp1) of Rattus norvegicus (Rat).